We begin with the raw amino-acid sequence, 132 residues long: Mercuric resistance operon regulatory protein (132 aa).

The HTH merR-type domain occupies 2–71; that stretch reads KFRIGELADK…LNEIDKLLGV (70 aa). Positions 5-24 form a DNA-binding region, H-T-H motif; it reads IGELADKCGVNKETIRYYER. Hg(2+) is bound by residues Cys-79, Cys-114, and Cys-123.

As to quaternary structure, homodimer.

In terms of biological role, mediates the mercuric-dependent induction of mercury resistance operon. In the absence of mercury MerR represses transcription by binding tightly to the mer operator region; when mercury is present the dimeric complex binds a single ion and becomes a potent transcriptional activator, while remaining bound to the mer site. This chain is Mercuric resistance operon regulatory protein (merR1), found in Bacillus cereus.